A 534-amino-acid polypeptide reads, in one-letter code: Cytochrome c oxidase subunit 1 (534 aa).

Topologically, residues 1 to 14 are mitochondrial matrix; it reads MVQRWLYSTNAKDI. Residues 15 to 39 form a helical membrane-spanning segment; the sequence is AVLYFMLAIFSGMAGTAMSLIIRLE. Residues Glu-39, Ala-42, and Gly-44 each coordinate Ca(2+). Residues 40-54 are Mitochondrial intermembrane-facing; the sequence is LAAPGSQYLHGNSQL. A helical membrane pass occupies residues 55–88; sequence FNVLVVGHAVLMIFFLVMPALIGGFGNYLLPLMI. His-62 provides a ligand contact to Fe(II)-heme a. Residues 89 to 97 are Mitochondrial matrix-facing; it reads GATDTAFPR. Residues 98–118 form a helical membrane-spanning segment; it reads INNIAFWVLPMGLVCLVTSTL. The Mitochondrial intermembrane segment spans residues 119-142; the sequence is VESGAGTGWTVYPPLSSIQAHSGP. The chain crosses the membrane as a helical span at residues 143 to 171; sequence SVDLAIFALHLTSISSLLGAINFIVTTLN. The Mitochondrial matrix portion of the chain corresponds to 172 to 183; sequence MRTNGMTMHKLP. Residues 184-215 traverse the membrane as a helical segment; that stretch reads LFVWSIFITAFLLLLSLPVLSAGITMLLLDRN. Topologically, residues 216–228 are mitochondrial intermembrane; that stretch reads FNTSFFEVSGGGD. Residues 229 to 263 form a helical membrane-spanning segment; sequence PILYEHLFWFFGHPEVYILIIPGFGIISHVVSTYS. Cu cation is bound at residue His-241. The segment at residues 241–245 is a cross-link (1'-histidyl-3'-tyrosine (His-Tyr)); it reads HPEVY. Tyr-245 is a binding site for O2. The Mitochondrial matrix portion of the chain corresponds to 264 to 269; that stretch reads KKPVFG. The helical transmembrane segment at 270 to 295 threads the bilayer; the sequence is EISMVYAMASIGLLGFLVWSHHMYIV. Cu cation contacts are provided by His-290 and His-291. Residues 296–298 lie on the Mitochondrial intermembrane side of the membrane; the sequence is GLD. The chain crosses the membrane as a helical span at residues 299-327; the sequence is ADTRAYFTSATMIIAIPTGIKIFSWLATI. The Mitochondrial matrix portion of the chain corresponds to 328–335; the sequence is HGGSIRLA. The helical transmembrane segment at 336 to 358 threads the bilayer; the sequence is TPMLYAIAFLFLFTMGGLTGVAL. At 359–370 the chain is on the mitochondrial intermembrane side; the sequence is ANASLDVAFHDT. Mg(2+)-binding residues include His-368 and Asp-369. Residues 371–400 traverse the membrane as a helical segment; sequence YYVVGHFHYVLSMGAIFSLFAGYYYWSPQI. His-376 serves as a coordination point for heme a3. His-378 is a binding site for Fe(II)-heme a. The Mitochondrial matrix segment spans residues 401-406; it reads LGLNYN. The helical transmembrane segment at 407 to 431 threads the bilayer; sequence EKLAQIQFWLIFIGANVIFFPMHFL. Residues 432-449 are Mitochondrial intermembrane-facing; that stretch reads GINGMPRRIPDYPDAFAG. Pro-441 is a binding site for Ca(2+). Residues 450-474 traverse the membrane as a helical segment; the sequence is WNYVASIGSFIATLSLFLFIYILYD. Residues 475 to 534 are Mitochondrial matrix-facing; the sequence is QLVNGLNNKVNNKSVIYNKAPDFVESNTIFNLNTVKSSSIEFLLTSPPAVHSFNTPAVQS.

Belongs to the heme-copper respiratory oxidase family. In terms of assembly, component of the cytochrome c oxidase (complex IV, CIV), a multisubunit enzyme composed of 12 subunits. The complex is composed of a catalytic core of 3 subunits COX1, COX2 and COX3, encoded in the mitochondrial DNA, and 9 supernumerary subunits COX4, COX5A (or COX5B), COX6, COX7, COX8, COX9, COX12, COX13 and COX26, which are encoded in the nuclear genome. The complex exists as a monomer or a dimer and forms supercomplexes (SCs) in the inner mitochondrial membrane with a dimer of ubiquinol-cytochrome c oxidoreductase (cytochrome b-c1 complex, complex III, CIII), resulting in 2 different assemblies (supercomplexes III(2)IV and III(2)IV(2)). Heme is required as a cofactor. Requires Cu cation as cofactor. Post-translationally, the N-terminus is blocked.

Its subcellular location is the mitochondrion inner membrane. The catalysed reaction is 4 Fe(II)-[cytochrome c] + O2 + 8 H(+)(in) = 4 Fe(III)-[cytochrome c] + 2 H2O + 4 H(+)(out). Its pathway is energy metabolism; oxidative phosphorylation. Functionally, component of the cytochrome c oxidase, the last enzyme in the mitochondrial electron transport chain which drives oxidative phosphorylation. The respiratory chain contains 3 multisubunit complexes succinate dehydrogenase (complex II, CII), ubiquinol-cytochrome c oxidoreductase (cytochrome b-c1 complex, complex III, CIII) and cytochrome c oxidase (complex IV, CIV), that cooperate to transfer electrons derived from NADH and succinate to molecular oxygen, creating an electrochemical gradient over the inner membrane that drives transmembrane transport and the ATP synthase. Cytochrome c oxidase is the component of the respiratory chain that catalyzes the reduction of oxygen to water. Electrons originating from reduced cytochrome c in the intermembrane space (IMS) are transferred via the dinuclear copper A center (CU(A)) of COX2 and heme A of COX1 to the active site in COX1, a binuclear center (BNC) formed by heme A3 and copper B (CU(B)). The BNC reduces molecular oxygen to 2 water molecules using 4 electrons from cytochrome c in the IMS and 4 protons from the mitochondrial matrix. COX1 is a catalytic core subunit containing heme A and the active site BNC with heme A3 and the copper atom CU(B). This chain is Cytochrome c oxidase subunit 1 (COX1), found in Saccharomyces cerevisiae (strain ATCC 204508 / S288c) (Baker's yeast).